Consider the following 68-residue polypeptide: MEC1-mediated checkpoint protein HUG1 (68 aa).

Its subcellular location is the cytoplasm. The protein resides in the nucleus. Its function is as follows. Involved in the MEC1-mediated checkpoint response to DNA damage and replication arrest. The polypeptide is MEC1-mediated checkpoint protein HUG1 (HUG1) (Saccharomyces cerevisiae (strain ATCC 204508 / S288c) (Baker's yeast)).